The following is a 144-amino-acid chain: 3-dehydroquinate dehydratase (144 aa).

The active-site Proton acceptor is Tyr-24. Substrate-binding residues include Asn-73, His-79, and Asp-86. His-99 acts as the Proton donor in catalysis. Residues 100-101 (LS) and Arg-110 contribute to the substrate site.

It belongs to the type-II 3-dehydroquinase family. As to quaternary structure, homododecamer.

The catalysed reaction is 3-dehydroquinate = 3-dehydroshikimate + H2O. It functions in the pathway metabolic intermediate biosynthesis; chorismate biosynthesis; chorismate from D-erythrose 4-phosphate and phosphoenolpyruvate: step 3/7. Its function is as follows. Catalyzes a trans-dehydration via an enolate intermediate. This Shewanella sp. (strain MR-4) protein is 3-dehydroquinate dehydratase.